The following is a 651-amino-acid chain: Meiotic expression up-regulated protein 6 (651 aa).

Composition is skewed to basic and acidic residues over residues 1 to 12 (MSYEGREERPEQ) and 21 to 30 (VSEHNEHDSG). The disordered stretch occupies residues 1–102 (MSYEGREERP…EKKSKKKAKD (102 aa)). Over residues 72-83 (TVDNIDPADDDP) the composition is skewed to acidic residues. Residues 90 to 102 (KVEEKKSKKKAKD) are compositionally biased toward basic and acidic residues. A PH domain is found at 194 to 261 (CRGLLFYSKS…WITDLKNAIA (68 aa)). Disordered stretches follow at residues 365 to 430 (TVEA…GTPI), 468 to 514 (VATP…KGGN), and 587 to 630 (TIKP…QMPQ). 2 stretches are compositionally biased toward polar residues: residues 410-429 (ESTS…NGTP) and 478-490 (PSTA…SVVS). A compositionally biased stretch (basic residues) spans 497–514 (KKAGKKHHRHHKKKKGGN). The span at 587-604 (TIKPETPLTPTTTPTPRT) shows a compositional bias: low complexity.

The polypeptide is Meiotic expression up-regulated protein 6 (meu6) (Schizosaccharomyces pombe (strain 972 / ATCC 24843) (Fission yeast)).